Here is a 445-residue protein sequence, read N- to C-terminus: Phosphoglucosamine mutase (445 aa).

Serine 101 acts as the Phosphoserine intermediate in catalysis. Mg(2+)-binding residues include serine 101, aspartate 240, aspartate 242, and aspartate 244. Serine 101 carries the post-translational modification Phosphoserine.

The protein belongs to the phosphohexose mutase family. It depends on Mg(2+) as a cofactor. In terms of processing, activated by phosphorylation.

The catalysed reaction is alpha-D-glucosamine 1-phosphate = D-glucosamine 6-phosphate. In terms of biological role, catalyzes the conversion of glucosamine-6-phosphate to glucosamine-1-phosphate. The polypeptide is Phosphoglucosamine mutase (Pseudomonas fluorescens (strain SBW25)).